A 275-amino-acid polypeptide reads, in one-letter code: Transcription factor JUNGBRUNNEN 1 (275 aa).

A disordered region spans residues 1–24 (MSGEGNLGKDHEEENEAPLPGFRF). One can recognise an NAC domain in the interval 18–167 (PLPGFRFHPT…VWTLCRIFKR (150 aa)). The DNA-binding element occupies 115–173 (VGLKKSLVYYLGSAGKGTKTDWMMHEFRLPSTTKTDSPAQQAEVWTLCRIFKRVTSQRN). Residues 191–219 (CSKTSSLDSDHTSHRTVDSMSHEPPLPQP) are disordered. Residues 198 to 211 (DSDHTSHRTVDSMS) are compositionally biased toward basic and acidic residues.

In terms of tissue distribution, expressed in roots, root caps, cotyledons, tips and margin of young leaves, senescent regions of fully expanded leaves and floral tissues, including old sepals, petals, staments, mature anthers and pollen grains. Not detected in the abscission zone of open flowers, emerging lateral roots and root meristematic zones.

The protein localises to the nucleus. Functionally, transcription factor that binds to the 5'- RRYGCCGT-3' consensus core sequence. Central longevity regulator. Negative regulator of leaf senescence. Modulates cellular H(2)O(2) levels and enhances tolerance to various abiotic stresses through the regulation of DREB2A. The protein is Transcription factor JUNGBRUNNEN 1 (JUB1) of Arabidopsis thaliana (Mouse-ear cress).